We begin with the raw amino-acid sequence, 76 residues long: MAPSALLRPFWKLLAPARFPSVSSSRSKFYIQEPPHGSPNWLKVGLTLGTSVFLWIYLIKQHNEDVLEYKRRNGLE.

The transit peptide at 1 to 27 directs the protein to the mitochondrion; it reads MAPSALLRPFWKLLAPARFPSVSSSRS. A helical transmembrane segment spans residues 41-59; the sequence is WLKVGLTLGTSVFLWIYLI.

This sequence belongs to the complex I NDUFC1 subunit family. Complex I is composed of 45 different subunits.

The protein resides in the mitochondrion inner membrane. Accessory subunit of the mitochondrial membrane respiratory chain NADH dehydrogenase (Complex I), that is believed not to be involved in catalysis. Complex I functions in the transfer of electrons from NADH to the respiratory chain. The immediate electron acceptor for the enzyme is believed to be ubiquinone. This chain is NADH dehydrogenase [ubiquinone] 1 subunit C1, mitochondrial (NDUFC1), found in Bos taurus (Bovine).